The chain runs to 110 residues: UPF0060 membrane protein Ajs_2087 (110 aa).

4 consecutive transmembrane segments (helical) span residues 7–27, 33–53, 63–83, and 86–106; these read LALFLLTAVAEIVGCYLPWLW, SAWLLVPAAASLALFAWLLTL, AAYGGVYVAVALVWLWTVDGV, and GPWDWLGVAVTLCGMAIIAFA.

This sequence belongs to the UPF0060 family.

The protein resides in the cell inner membrane. The chain is UPF0060 membrane protein Ajs_2087 from Acidovorax sp. (strain JS42).